We begin with the raw amino-acid sequence, 236 residues long: VVGGRVAQPNSWPWQISLQYKSGSSYYHTCGGSLIRQGWVMTAAHCVDSARTWRVVLGEHNLNTNEGKEQIMTVNSVFIHSGWNSDDVAGGYDIALLRLNTQASLNSAVQLAALPPSNQILPNNNPCYITGWGKTSTGGPLSDSLKQAWLPSVDHATCSSSGWWGSTVKTTMVCAGGGANSGCNGDSGGPLNCQVNGSYYVHGVTSFVSSSGCNASKKPTVFTRVSAYISWMNGIM.

Positions 1–236 (VVGGRVAQPN…AYISWMNGIM (236 aa)) constitute a Peptidase S1 domain. Residues C30 and C46 are joined by a disulfide bond. Residue H45 is the Charge relay system of the active site. 5 residues coordinate Ca(2+): E59, N61, T64, E66, and E69. D93 (charge relay system) is an active-site residue. Cystine bridges form between C127–C193, C158–C174, and C183–C213. The active-site Charge relay system is the S187.

It belongs to the peptidase S1 family. Elastase subfamily. The cofactor is Ca(2+). Pancreas.

It localises to the secreted. The enzyme catalyses Hydrolysis of proteins, including elastin. Preferential cleavage: Ala-|-Xaa.. In terms of biological role, acts upon elastin. This Salmo salar (Atlantic salmon) protein is Elastase-1.